The following is a 188-amino-acid chain: Peptidyl-prolyl cis-trans isomerase H (188 aa).

An N-acetylalanine modification is found at alanine 2. The PPIase cyclophilin-type domain occupies 14 to 176; that stretch reads FFDVSIGGQE…WTHSLTCPAL (163 aa).

The protein belongs to the cyclophilin-type PPIase family. PPIase H subfamily. As to quaternary structure, interacts directly with PRPF4. Part of a heteromeric complex containing PPIH, PRPF3 and PRPF4 that is stable in the absence of RNA. Component of the U4/U6-U5 tri-snRNP complex composed of the U4, U6 and U5 snRNAs and at least PRPF3, PRPF4, PRPF6, PRPF8, PRPF31, SNRNP200, TXNL4A, SNRNP40, DDX23, CD2BP2, PPIH, SNU13, EFTUD2, SART1 and USP39. Heterodimer with PRPF18. Heterodimer with PRPF18.

It is found in the nucleus speckle. It localises to the cytoplasm. It catalyses the reaction [protein]-peptidylproline (omega=180) = [protein]-peptidylproline (omega=0). With respect to regulation, inhibited by cyclosporin A. PPIase that catalyzes the cis-trans isomerization of proline imidic peptide bonds in oligopeptides and may therefore assist protein folding. Participates in pre-mRNA splicing. May play a role in the assembly of the U4/U5/U6 tri-snRNP complex, one of the building blocks of the spliceosome. May act as a chaperone. This is Peptidyl-prolyl cis-trans isomerase H (Ppih) from Mus musculus (Mouse).